Here is a 438-residue protein sequence, read N- to C-terminus: Aspartate--tRNA(Asp/Asn) ligase (438 aa).

L-aspartate is bound at residue E176. Positions 198–201 (QLYK) are aspartate. R220 is an L-aspartate binding site. Residues 220 to 222 (RAE), 228 to 230 (RHL), and E361 each bind ATP. Mg(2+)-binding residues include E361 and S364. L-aspartate is bound by residues S364 and R368. ATP is bound at residue 409–412 (GADR).

The protein belongs to the class-II aminoacyl-tRNA synthetase family. Type 2 subfamily. In terms of assembly, homodimer. Mg(2+) serves as cofactor.

The protein localises to the cytoplasm. The enzyme catalyses tRNA(Asx) + L-aspartate + ATP = L-aspartyl-tRNA(Asx) + AMP + diphosphate. Aspartyl-tRNA synthetase with relaxed tRNA specificity since it is able to aspartylate not only its cognate tRNA(Asp) but also tRNA(Asn). Reaction proceeds in two steps: L-aspartate is first activated by ATP to form Asp-AMP and then transferred to the acceptor end of tRNA(Asp/Asn). The sequence is that of Aspartate--tRNA(Asp/Asn) ligase from Methanococcus vannielii (strain ATCC 35089 / DSM 1224 / JCM 13029 / OCM 148 / SB).